The chain runs to 61 residues: Ferredoxin-3 (61 aa).

2 4Fe-4S ferredoxin-type domains span residues 2-31 (YKIT…LQDG) and 32-61 (KAVA…VEEN). Cys-11 and Cys-17 together coordinate [3Fe-4S] cluster. The [4Fe-4S] cluster site is built by Cys-21, Cys-41, Cys-44, and Cys-47. Residue Cys-51 coordinates [3Fe-4S] cluster.

[3Fe-4S] cluster serves as cofactor. Requires [4Fe-4S] cluster as cofactor.

Functionally, ferredoxins are iron-sulfur proteins that transfer electrons in a wide variety of metabolic reactions. The sequence is that of Ferredoxin-3 from Desulfocurvibacter africanus (Desulfovibrio africanus).